Consider the following 156-residue polypeptide: ATP synthase subunit b (156 aa).

Residues isoleucine 3–threonine 23 traverse the membrane as a helical segment.

The protein belongs to the ATPase B chain family. F-type ATPases have 2 components, F(1) - the catalytic core - and F(0) - the membrane proton channel. F(1) has five subunits: alpha(3), beta(3), gamma(1), delta(1), epsilon(1). F(0) has three main subunits: a(1), b(2) and c(10-14). The alpha and beta chains form an alternating ring which encloses part of the gamma chain. F(1) is attached to F(0) by a central stalk formed by the gamma and epsilon chains, while a peripheral stalk is formed by the delta and b chains.

The protein resides in the cell inner membrane. In terms of biological role, f(1)F(0) ATP synthase produces ATP from ADP in the presence of a proton or sodium gradient. F-type ATPases consist of two structural domains, F(1) containing the extramembraneous catalytic core and F(0) containing the membrane proton channel, linked together by a central stalk and a peripheral stalk. During catalysis, ATP synthesis in the catalytic domain of F(1) is coupled via a rotary mechanism of the central stalk subunits to proton translocation. Component of the F(0) channel, it forms part of the peripheral stalk, linking F(1) to F(0). In Xylella fastidiosa (strain M23), this protein is ATP synthase subunit b.